The following is a 263-amino-acid chain: N-acyl homoserine lactonase AttM (263 aa).

Residues His-103, His-105, Asp-107, His-108, His-180, Asp-202, and His-247 each contribute to the Zn(2+) site.

Belongs to the metallo-beta-lactamase superfamily. It depends on Zn(2+) as a cofactor.

The catalysed reaction is an N-acyl-L-homoserine lactone + H2O = an N-acyl-L-homoserine + H(+). This is N-acyl homoserine lactonase AttM from Azorhizobium caulinodans (strain ATCC 43989 / DSM 5975 / JCM 20966 / LMG 6465 / NBRC 14845 / NCIMB 13405 / ORS 571).